We begin with the raw amino-acid sequence, 224 residues long: MLDSPKLTARQQQILDLIQTAIARTGAPPTRAEIAAELGFKSANAAEEHLQALARKGVIELVSGTSRGIRLRGETVRNINAARGAQFNLPIPGLSQLTLPLVGRVAAGSPILAQEHVDQTYTVEGSLFAHKPDYLLKVRGMSMRDAGIMDGDLLAVQATREARNGQIIVARLGDDVTVKRLRRTGSAIELLPENPDYPVIRVEPGEPFEIEGLAVGLIRNTMLM.

The segment at residues 31-51 (RAEIAAELGFKSANAAEEHLQ) is a DNA-binding region (H-T-H motif). Residues Ser142 and Lys179 each act as for autocatalytic cleavage activity in the active site.

This sequence belongs to the peptidase S24 family. Homodimer.

The enzyme catalyses Hydrolysis of Ala-|-Gly bond in repressor LexA.. In terms of biological role, represses a number of genes involved in the response to DNA damage (SOS response), including recA and lexA. In the presence of single-stranded DNA, RecA interacts with LexA causing an autocatalytic cleavage which disrupts the DNA-binding part of LexA, leading to derepression of the SOS regulon and eventually DNA repair. The polypeptide is LexA repressor (Acidovorax ebreus (strain TPSY) (Diaphorobacter sp. (strain TPSY))).